A 1005-amino-acid polypeptide reads, in one-letter code: Band 4.1-like protein 2 (1005 aa).

The segment at 1 to 80 is disordered; sequence MTTEVGSVSE…SRGISRFIPP (80 aa). An N-acetylthreonine modification is found at Thr-2. Ser-7 carries the post-translational modification Phosphoserine. Basic and acidic residues predominate over residues 22 to 31; that stretch reads ATKEKPKEVA. A phosphoserine mark is found at Ser-39, Ser-58, and Ser-87. At Thr-89 the chain carries Phosphothreonine. The tract at residues 93 to 196 is disordered; the sequence is AKDGGDKKEP…GGAAKRETKE (104 aa). 2 stretches are compositionally biased toward basic and acidic residues: residues 111-157 and 169-196; these read VLDK…EKPS and VSKE…ETKE. Glycyl lysine isopeptide (Lys-Gly) (interchain with G-Cter in SUMO2) cross-links involve residues Lys-140 and Lys-144. Ser-170, Ser-208, Ser-386, Ser-402, Ser-499, Ser-550, Ser-562, Ser-575, Ser-598, and Ser-614 each carry phosphoserine. Residues 218 to 499 enclose the FERM domain; that stretch reads VQCKVTLLDG…EHHTFYRLVS (282 aa). Residues 502–610 are hydrophilic; the sequence is QPPKAKFLTL…KAPHLQLIEG (109 aa). A spectrin--actin-binding region spans residues 611–676; sequence KKNSLRVEGD…WEKRRITPLS (66 aa). Tyr-623 bears the Phosphotyrosine mark. Ser-627 and Ser-647 each carry phosphoserine. The interval 652–800 is disordered; the sequence is KRNFMESTPE…EEAVPEASPV (149 aa). Residues 675–686 show a composition bias toward polar residues; it reads LSLQTQGSSHET. Over residues 690-711 the composition is skewed to basic and acidic residues; the sequence is VEEKKRAEVGKDERVITEEMNG. Residues Ser-715 and Ser-718 each carry the phosphoserine modification. The span at 734–746 shows a compositional bias: low complexity; that stretch reads STSLSSESSSSSS. Basic and acidic residues-rich tracts occupy residues 754-770 and 780-793; these read GEYR…IREE and EPRP…REEA. Phosphothreonine is present on Thr-763. Position 828 is a phosphoserine (Ser-828). The interval 855–1005 is C-terminal (CTD); it reads HVDIDVLPQI…ETELAEEGED (151 aa).

As to quaternary structure, interacts with FCGR1A. Interacts with TRPC4. Interacts (via CTD domain) with FKBP2. Interacts with NUMA1; this interaction is negatively regulated by CDK1 during metaphase and promotes anaphase-specific localization of NUMA1 in symmetrically dividing cells. As to expression, widely expressed.

The protein localises to the cytoplasm. It localises to the cytoskeleton. It is found in the cell cortex. Its subcellular location is the cell membrane. Functionally, required for dynein-dynactin complex and NUMA1 recruitment at the mitotic cell cortex during anaphase. The polypeptide is Band 4.1-like protein 2 (Homo sapiens (Human)).